The chain runs to 258 residues: MKQLYWNICGEGDCDLVLLHGWGLNAGVWHCIIDRLTPHFRLHLVDLPGYGRSTEFGAMSLSEMAEIVLQQAPQQAIWLGWSMGGLVASQIALSHPERVRGLITVSSSPCFTAHDEWPGIRPEVLAGFQQQLSEDFQRTVERFLALQTLGTESARQDARLLKAVVLQHQMPEVAVLTGGLDILRTADLREELADCSLPFLRIYGYLDGLVPRKVAALLNSQWPHTQSVVMPGSAHAPFVSHPEAFSQLVVDFAQQSNT.

Residues 16–241 enclose the AB hydrolase-1 domain; it reads LVLLHGWGLN…GSAHAPFVSH (226 aa). Substrate contacts are provided by residues Trp22, 82–83, and 143–147; these read SM and FLALQ. Residue Ser82 is the Nucleophile of the active site. Active-site residues include Asp207 and His235. A substrate-binding site is contributed by His235.

This sequence belongs to the AB hydrolase superfamily. Carboxylesterase BioH family. Monomer.

It localises to the cytoplasm. The catalysed reaction is 6-carboxyhexanoyl-[ACP] methyl ester + H2O = 6-carboxyhexanoyl-[ACP] + methanol + H(+). Its pathway is cofactor biosynthesis; biotin biosynthesis. The physiological role of BioH is to remove the methyl group introduced by BioC when the pimeloyl moiety is complete. It allows to synthesize pimeloyl-ACP via the fatty acid synthetic pathway through the hydrolysis of the ester bonds of pimeloyl-ACP esters. The protein is Pimeloyl-[acyl-carrier protein] methyl ester esterase of Yersinia enterocolitica serotype O:8 / biotype 1B (strain NCTC 13174 / 8081).